A 394-amino-acid polypeptide reads, in one-letter code: 1-deoxy-D-xylulose 5-phosphate reductoisomerase (394 aa).

NADPH is bound by residues T28, G29, S30, I31, N57, and N133. K134 contacts 1-deoxy-D-xylulose 5-phosphate. E135 is an NADPH binding site. D157 lines the Mn(2+) pocket. The 1-deoxy-D-xylulose 5-phosphate site is built by S158, E159, S183, and H206. Residue E159 participates in Mn(2+) binding. G212 serves as a coordination point for NADPH. Residues S219, N224, K225, and E228 each coordinate 1-deoxy-D-xylulose 5-phosphate. A Mn(2+)-binding site is contributed by E228.

This sequence belongs to the DXR family. Mg(2+) serves as cofactor. Requires Mn(2+) as cofactor.

It catalyses the reaction 2-C-methyl-D-erythritol 4-phosphate + NADP(+) = 1-deoxy-D-xylulose 5-phosphate + NADPH + H(+). It functions in the pathway isoprenoid biosynthesis; isopentenyl diphosphate biosynthesis via DXP pathway; isopentenyl diphosphate from 1-deoxy-D-xylulose 5-phosphate: step 1/6. Catalyzes the NADPH-dependent rearrangement and reduction of 1-deoxy-D-xylulose-5-phosphate (DXP) to 2-C-methyl-D-erythritol 4-phosphate (MEP). The protein is 1-deoxy-D-xylulose 5-phosphate reductoisomerase of Nocardia farcinica (strain IFM 10152).